The sequence spans 112 residues: uncharacterized protein (112 aa).

This is an uncharacterized protein from Gallus gallus (Chicken).